The primary structure comprises 1085 residues: Toxin VasX (1085 aa).

The tract at residues 1 to 20 is disordered; it reads MSNPNQAAKTGQTNDAQNPA. A run of 4 helical transmembrane segments spans residues 753–773, 813–833, 860–880, and 884–904; these read ALGE…AISA, IALV…ESWG, IIFY…PSIA, and AGWM…GVIL.

It localises to the secreted. It is found in the host membrane. In terms of biological role, toxin secreted by the type VI (T6SS) secretion system that acts on prokaryotic target cells. Acts in conjunction with VasW, an accessory protein to VasX, to compromise the inner membrane of prokaryotic target cells. This is Toxin VasX from Vibrio cholerae serotype O1 (strain ATCC 39315 / El Tor Inaba N16961).